The following is a 485-amino-acid chain: ATP synthase subunit beta 1 (485 aa).

157–164 (GGAGVGKT) lines the ATP pocket.

Belongs to the ATPase alpha/beta chains family. As to quaternary structure, F-type ATPases have 2 components, CF(1) - the catalytic core - and CF(0) - the membrane proton channel. CF(1) has five subunits: alpha(3), beta(3), gamma(1), delta(1), epsilon(1). CF(0) has three main subunits: a(1), b(2) and c(9-12). The alpha and beta chains form an alternating ring which encloses part of the gamma chain. CF(1) is attached to CF(0) by a central stalk formed by the gamma and epsilon chains, while a peripheral stalk is formed by the delta and b chains.

It is found in the cell inner membrane. It carries out the reaction ATP + H2O + 4 H(+)(in) = ADP + phosphate + 5 H(+)(out). Its function is as follows. Produces ATP from ADP in the presence of a proton gradient across the membrane. The catalytic sites are hosted primarily by the beta subunits. This Psychromonas ingrahamii (strain DSM 17664 / CCUG 51855 / 37) protein is ATP synthase subunit beta 1.